The sequence spans 185 residues: ATP-dependent protease subunit HslV (185 aa).

Threonine 2 is an active-site residue. Glycine 157, cysteine 160, and threonine 163 together coordinate Na(+).

The protein belongs to the peptidase T1B family. HslV subfamily. In terms of assembly, a double ring-shaped homohexamer of HslV is capped on each side by a ring-shaped HslU homohexamer. The assembly of the HslU/HslV complex is dependent on binding of ATP.

The protein localises to the cytoplasm. The catalysed reaction is ATP-dependent cleavage of peptide bonds with broad specificity.. Its activity is regulated as follows. Allosterically activated by HslU binding. Its function is as follows. Protease subunit of a proteasome-like degradation complex believed to be a general protein degrading machinery. The chain is ATP-dependent protease subunit HslV from Idiomarina loihiensis (strain ATCC BAA-735 / DSM 15497 / L2-TR).